Reading from the N-terminus, the 569-residue chain is Cysteine--tRNA ligase CPS1 homolog, chloroplastic/mitochondrial (569 aa).

A chloroplast and mitochondrion-targeting transit peptide spans 1–42 (MAAARRAAGLLPLLLSSPSRARLPHRQALALTPPLLRPHRLY). Zn(2+) is bound at residue Cys-99. Residues 101 to 111 (VTPYDDSHIGH) carry the 'HIGH' region motif. Residues Cys-279, His-304, and Glu-308 each coordinate Zn(2+). The short motif at 336 to 340 (KMSKS) is the 'KMSKS' region element. Lys-339 lines the ATP pocket.

The protein belongs to the class-I aminoacyl-tRNA synthetase family. The cofactor is Zn(2+).

It localises to the plastid. The protein localises to the chloroplast. Its subcellular location is the mitochondrion. The enzyme catalyses tRNA(Cys) + L-cysteine + ATP = L-cysteinyl-tRNA(Cys) + AMP + diphosphate. Its function is as follows. Nuclear genome-encoded factor required for normal assembly of chloroplast polysomes. This Oryza sativa subsp. japonica (Rice) protein is Cysteine--tRNA ligase CPS1 homolog, chloroplastic/mitochondrial.